A 444-amino-acid chain; its full sequence is ATP-dependent protease ATPase subunit HslU (444 aa).

Residues Ile18, 60–65, Asp256, Glu321, and Arg393 each bind ATP; that span reads GVGKTE.

It belongs to the ClpX chaperone family. HslU subfamily. A double ring-shaped homohexamer of HslV is capped on each side by a ring-shaped HslU homohexamer. The assembly of the HslU/HslV complex is dependent on binding of ATP.

It is found in the cytoplasm. Its function is as follows. ATPase subunit of a proteasome-like degradation complex; this subunit has chaperone activity. The binding of ATP and its subsequent hydrolysis by HslU are essential for unfolding of protein substrates subsequently hydrolyzed by HslV. HslU recognizes the N-terminal part of its protein substrates and unfolds these before they are guided to HslV for hydrolysis. The protein is ATP-dependent protease ATPase subunit HslU of Buchnera aphidicola subsp. Baizongia pistaciae (strain Bp).